The sequence spans 283 residues: Protoheme IX farnesyltransferase (283 aa).

Helical transmembrane passes span 6–26, 35–55, 85–105, 106–126, 131–151, 160–180, 207–227, 230–250, and 262–282; these read LLLTKPGIILGNLVTVMAGFL, FGLFFSTILGLAFIMASGCVF, AIVFGLALAIVGAIILYFYTN, LLTLVIAELGFIIYVFFYSIW, VYGTAIGSLAGAVPPLVGYCA, AFILFAMMVFWQMPHFFSIAI, ILLYIIIFTLTSSLLTFFHFT, LYLILTIGLGLTWLLMGLRGL, and MFRFSLVIISVLSLTIPFDLV.

It belongs to the UbiA prenyltransferase family. Protoheme IX farnesyltransferase subfamily.

The protein localises to the cell inner membrane. It carries out the reaction heme b + (2E,6E)-farnesyl diphosphate + H2O = Fe(II)-heme o + diphosphate. Its pathway is porphyrin-containing compound metabolism; heme O biosynthesis; heme O from protoheme: step 1/1. Its function is as follows. Converts heme B (protoheme IX) to heme O by substitution of the vinyl group on carbon 2 of heme B porphyrin ring with a hydroxyethyl farnesyl side group. This Protochlamydia amoebophila (strain UWE25) protein is Protoheme IX farnesyltransferase.